We begin with the raw amino-acid sequence, 126 residues long: VEGSLVQFETMIMKLAKRSGFFWYSFYGCYCGWGGHGLPQDPTDRCCFVHDCCYGKVTNCNPKTATYSYTEENDGIVCGGDDPCKKQVCECDRVAAMCFRDNKDTYDSDKYWKLPPQKCQEDPEPC.

The N-terminal stretch at Val1 to Gly3 is a signal peptide. 7 cysteine pairs are disulfide-bonded: Cys29–Cys119, Cys31–Cys47, Cys46–Cys98, Cys52–Cys126, Cys53–Cys91, Cys60–Cys84, and Cys78–Cys89. Residues Tyr30, Gly32, and Gly34 each contribute to the Ca(2+) site. His50 is an active-site residue. Asp51 contributes to the Ca(2+) binding site. The active site involves Asp92.

In terms of assembly, homodimer. Ca(2+) serves as cofactor. Expressed by the venom gland.

Its subcellular location is the secreted. The enzyme catalyses a 1,2-diacyl-sn-glycero-3-phosphocholine + H2O = a 1-acyl-sn-glycero-3-phosphocholine + a fatty acid + H(+). Its function is as follows. Snake venom phospholipase A2 (PLA2) that inhibits ADP-induced platelet aggregation. PLA2 catalyzes the calcium-dependent hydrolysis of the 2-acyl groups in 3-sn-phosphoglycerides. This chain is Acidic phospholipase A2 S1E6-a, found in Calloselasma rhodostoma (Malayan pit viper).